The sequence spans 466 residues: Asparagine--tRNA ligase (466 aa).

The protein belongs to the class-II aminoacyl-tRNA synthetase family. In terms of assembly, homodimer.

The protein localises to the cytoplasm. It catalyses the reaction tRNA(Asn) + L-asparagine + ATP = L-asparaginyl-tRNA(Asn) + AMP + diphosphate + H(+). The protein is Asparagine--tRNA ligase of Escherichia coli O157:H7.